Consider the following 381-residue polypeptide: 8-amino-7-oxononanoate synthase (381 aa).

R27 provides a ligand contact to substrate. 105–106 (GY) is a pyridoxal 5'-phosphate binding site. H130 contacts substrate. Pyridoxal 5'-phosphate is bound by residues S176, 201–204 (DEAH), and 232–235 (TLSK). An N6-(pyridoxal phosphate)lysine modification is found at K235. Substrate is bound at residue T345.

Belongs to the class-II pyridoxal-phosphate-dependent aminotransferase family. BioF subfamily. As to quaternary structure, homodimer. Requires pyridoxal 5'-phosphate as cofactor.

It carries out the reaction 6-carboxyhexanoyl-[ACP] + L-alanine + H(+) = (8S)-8-amino-7-oxononanoate + holo-[ACP] + CO2. The protein operates within cofactor biosynthesis; biotin biosynthesis. In terms of biological role, catalyzes the decarboxylative condensation of pimeloyl-[acyl-carrier protein] and L-alanine to produce 8-amino-7-oxononanoate (AON), [acyl-carrier protein], and carbon dioxide. This Mycobacterium avium (strain 104) protein is 8-amino-7-oxononanoate synthase.